A 161-amino-acid polypeptide reads, in one-letter code: Anthranilate 1,2-dioxygenase small subunit (161 aa).

It belongs to the bacterial ring-hydroxylating dioxygenase beta subunit family. Part of a multicomponent enzyme system composed of a reductase (AndAa), a ferredoxin (AndAb) and a two-subunit oxygenase component (AndAc and AndAd).

The enzyme catalyses anthranilate + NADH + O2 + 3 H(+) = catechol + NH4(+) + CO2 + NAD(+). The catalysed reaction is anthranilate + NADPH + O2 + 3 H(+) = catechol + NH4(+) + CO2 + NADP(+). The protein operates within aromatic compound metabolism; anthranilate degradation via hydroxylation; catechol from anthranilate: step 1/1. Its function is as follows. Oxygenase component of anthranilate dioxygenase multicomponent enzyme system which catalyzes the incorporation of both atoms of molecular oxygen into anthranilate to form catechol. Can also act on benzoate and salicylate but not on 2-chlorobenzoate or o-toluate. This Burkholderia cepacia (Pseudomonas cepacia) protein is Anthranilate 1,2-dioxygenase small subunit.